The following is a 434-amino-acid chain: Tryptophan synthase beta chain 2 (434 aa).

The residue at position 110 (lysine 110) is an N6-(pyridoxal phosphate)lysine.

The protein belongs to the TrpB family. In terms of assembly, tetramer of two alpha and two beta chains. Requires pyridoxal 5'-phosphate as cofactor.

The enzyme catalyses (1S,2R)-1-C-(indol-3-yl)glycerol 3-phosphate + L-serine = D-glyceraldehyde 3-phosphate + L-tryptophan + H2O. It participates in amino-acid biosynthesis; L-tryptophan biosynthesis; L-tryptophan from chorismate: step 5/5. The beta subunit is responsible for the synthesis of L-tryptophan from indole and L-serine. This chain is Tryptophan synthase beta chain 2 (trpB2), found in Aquifex aeolicus (strain VF5).